The chain runs to 529 residues: Peptide chain release factor 3 (529 aa).

Residues 11–280 (AKRRTFAIIS…GLVAWAPAPM (270 aa)) form the tr-type G domain. Residues 20–27 (SHPDAGKT), 88–92 (DTPGH), and 142–145 (NKLD) each bind GTP.

The protein belongs to the TRAFAC class translation factor GTPase superfamily. Classic translation factor GTPase family. PrfC subfamily.

The protein localises to the cytoplasm. Its function is as follows. Increases the formation of ribosomal termination complexes and stimulates activities of RF-1 and RF-2. It binds guanine nucleotides and has strong preference for UGA stop codons. It may interact directly with the ribosome. The stimulation of RF-1 and RF-2 is significantly reduced by GTP and GDP, but not by GMP. In Salmonella gallinarum (strain 287/91 / NCTC 13346), this protein is Peptide chain release factor 3.